A 311-amino-acid chain; its full sequence is 4-diphosphocytidyl-2-C-methyl-D-erythritol kinase (311 aa).

Lys16 is a catalytic residue. 101–111 (PVAGGMAGGSA) is a binding site for ATP. Asp143 is a catalytic residue.

This sequence belongs to the GHMP kinase family. IspE subfamily.

It carries out the reaction 4-CDP-2-C-methyl-D-erythritol + ATP = 4-CDP-2-C-methyl-D-erythritol 2-phosphate + ADP + H(+). It participates in isoprenoid biosynthesis; isopentenyl diphosphate biosynthesis via DXP pathway; isopentenyl diphosphate from 1-deoxy-D-xylulose 5-phosphate: step 3/6. In terms of biological role, catalyzes the phosphorylation of the position 2 hydroxy group of 4-diphosphocytidyl-2C-methyl-D-erythritol. This Rhodococcus jostii (strain RHA1) protein is 4-diphosphocytidyl-2-C-methyl-D-erythritol kinase.